Reading from the N-terminus, the 197-residue chain is Protein tyrosine phosphatase receptor type C-associated protein (197 aa).

A helical membrane pass occupies residues 33–53; it reads VVTIVLLLLLLLLLVTALALA. Phosphoserine occurs at positions 99 and 103. Disordered regions lie at residues 120-164 and 177-197; these read GPEE…GSSA and SAAW…VTAL. The segment covering 124–145 has biased composition (basic and acidic residues); sequence AAAKEEEQRCQAEQTRDPRDTD.

In terms of assembly, interacts with CD45/PTPRC. In terms of processing, phosphorylated on tyrosine residues. In terms of tissue distribution, leukocyte-specific. Expressed in B- and T-cell lines, in spleen, thymus, and bone marrow of adult mice, and in embryos.

Its subcellular location is the membrane. The chain is Protein tyrosine phosphatase receptor type C-associated protein (Ptprcap) from Mus musculus (Mouse).